The primary structure comprises 331 residues: Bifunctional nuclease 1 (331 aa).

The region spanning 126–261 (CVQNNPRVLR…RIAYNNGLKV (136 aa)) is the BFN domain. Positions 291-326 (EAQEFDLVRNMLVAAVEERYKDAAQYRDQLFMFRAK) constitute a UVR domain.

Belongs to the bifunctional nuclease family.

The protein localises to the nucleus. Functionally, bifunctional nuclease with both RNase and DNase activities. Involved in basal defense response. Participates in abscisic acid-derived callose deposition following infection by a necrotrophic pathogen. The polypeptide is Bifunctional nuclease 1 (BBD1) (Oryza sativa subsp. indica (Rice)).